Reading from the N-terminus, the 345-residue chain is Phosphoribosylformylglycinamidine cyclo-ligase (345 aa).

It belongs to the AIR synthase family.

Its subcellular location is the cytoplasm. The enzyme catalyses 2-formamido-N(1)-(5-O-phospho-beta-D-ribosyl)acetamidine + ATP = 5-amino-1-(5-phospho-beta-D-ribosyl)imidazole + ADP + phosphate + H(+). Its pathway is purine metabolism; IMP biosynthesis via de novo pathway; 5-amino-1-(5-phospho-D-ribosyl)imidazole from N(2)-formyl-N(1)-(5-phospho-D-ribosyl)glycinamide: step 2/2. In Shewanella loihica (strain ATCC BAA-1088 / PV-4), this protein is Phosphoribosylformylglycinamidine cyclo-ligase.